Here is a 288-residue protein sequence, read N- to C-terminus: Nucleotide-binding protein Gura_2968 (288 aa).

8–15 is an ATP binding site; the sequence is GLSGSGKS. Position 59 to 62 (59 to 62) interacts with GTP; that stretch reads DIRG.

The protein belongs to the RapZ-like family.

Functionally, displays ATPase and GTPase activities. The protein is Nucleotide-binding protein Gura_2968 of Geotalea uraniireducens (strain Rf4) (Geobacter uraniireducens).